Consider the following 317-residue polypeptide: Ribonuclease Z (317 aa).

Zn(2+)-binding residues include His63, His65, Asp67, His68, His143, Asp214, and His272. Asp67 acts as the Proton acceptor in catalysis.

The protein belongs to the RNase Z family. Homodimer. It depends on Zn(2+) as a cofactor.

The enzyme catalyses Endonucleolytic cleavage of RNA, removing extra 3' nucleotides from tRNA precursor, generating 3' termini of tRNAs. A 3'-hydroxy group is left at the tRNA terminus and a 5'-phosphoryl group is left at the trailer molecule.. Zinc phosphodiesterase, which displays some tRNA 3'-processing endonuclease activity. Probably involved in tRNA maturation, by removing a 3'-trailer from precursor tRNA. This is Ribonuclease Z from Ligilactobacillus salivarius (strain UCC118) (Lactobacillus salivarius).